We begin with the raw amino-acid sequence, 88 residues long: MANSAQARKRVRQNNTRRQHAASQRSMIRTYIKKVDAAILAGDYDAATAAYNKAVPVIDRMADKGVIHKNKAARHKSRYNKAIKALKA.

The tract at residues 1-25 (MANSAQARKRVRQNNTRRQHAASQR) is disordered. Over residues 7-20 (ARKRVRQNNTRRQH) the composition is skewed to basic residues.

It belongs to the bacterial ribosomal protein bS20 family.

Binds directly to 16S ribosomal RNA. The chain is Small ribosomal subunit protein bS20 from Psychrobacter sp. (strain PRwf-1).